A 625-amino-acid chain; its full sequence is Tyrosine-protein kinase ITK/TSK (625 aa).

The region spanning 4–117 (FILLEEQLIK…WVLTLKEETR (114 aa)) is the PH domain. The segment at 119-155 (NNSLVSKYHPNFWMDGRWRCCSQLEKPAVGCAPYDPS) adopts a Btk-type zinc-finger fold. 4 residues coordinate Zn(2+): H127, C138, C139, and C149. Residues 153 to 174 (DPSKNASKKPLPPTPEDNRRSF) form a disordered region. An SH3 domain is found at 177–237 (PEETLVIALY…PSSYLVEKSP (61 aa)). A Phosphotyrosine; by autocatalysis modification is found at Y186. The 99-residue stretch at 245–343 (WYNKSISRDK…GLVTRLRYPV (99 aa)) folds into the SH2 domain. Positions 368–620 (LTFVQEIGSG…SQLLSQLAEI (253 aa)) constitute a Protein kinase domain. ATP is bound by residues 374–382 (IGSGQFGLV) and K396. Catalysis depends on D487, which acts as the Proton acceptor. Y517 carries the post-translational modification Phosphotyrosine; by LCK. S570 bears the Phosphoserine mark.

Belongs to the protein kinase superfamily. Tyr protein kinase family. TEC subfamily. As to quaternary structure, homooligomerizes; this association negatively regulates kinase activity. Interacts with PPIA/CYPA; this interaction regulates TCR signal strength via a proline-directed conformational switch in ITK. Interacts with THEMIS. Interacts with FASLG. Interacts with VAV1; this interaction is important for VAV1 localization and TCR-induced actin polarization. Interacts with TBX21. Requires Zn(2+) as cofactor. Phosphorylated at Tyr-517 in the activation loop of the kinase domain by LCK. Subsequent autophosphorylation at Tyr-186 leads to the kinase activation. The autophosphorylated Tyr-186 lies within the substrate binding sequence of the SH3 domain. Post-translationally, ubiquitinated. In terms of tissue distribution, is detected in the thymus, lymph node and very faintly in the spleen, but is not detected in the liver, lung, kidney, heart, brain, intestine or testis. Expressed in T-lymphocytes and mast cells. It may also be expressed in natural killer cells.

Its subcellular location is the cytoplasm. The protein localises to the nucleus. It carries out the reaction L-tyrosyl-[protein] + ATP = O-phospho-L-tyrosyl-[protein] + ADP + H(+). Its function is as follows. Tyrosine kinase that plays an essential role in regulation of the adaptive immune response. Regulates the development, function and differentiation of conventional T-cells and nonconventional NKT-cells. When antigen presenting cells (APC) activate T-cell receptor (TCR), a series of phosphorylation lead to the recruitment of ITK to the cell membrane, in the vicinity of the stimulated TCR receptor, where it is phosphorylated by LCK. Phosphorylation leads to ITK autophosphorylation and full activation. Once activated, phosphorylates PLCG1, leading to the activation of this lipase and subsequent cleavage of its substrates. In turn, the endoplasmic reticulum releases calcium in the cytoplasm and the nuclear activator of activated T-cells (NFAT) translocates into the nucleus to perform its transcriptional duty. Phosphorylates 2 essential adapter proteins: the linker for activation of T-cells/LAT protein and LCP2. Then, a large number of signaling molecules such as VAV1 are recruited and ultimately lead to lymphokine production, T-cell proliferation and differentiation. Required for TCR-mediated calcium response in gamma-delta T-cells, may also be involved in the modulation of the transcriptomic signature in the Vgamma2-positive subset of immature gamma-delta T-cells. Phosphorylates TBX21 at 'Tyr-525' and mediates its interaction with GATA3. The sequence is that of Tyrosine-protein kinase ITK/TSK (Itk) from Mus musculus (Mouse).